The chain runs to 239 residues: Enolase-phosphatase E1 (239 aa).

The protein belongs to the HAD-like hydrolase superfamily. MasA/MtnC family. As to quaternary structure, monomer. Mg(2+) is required as a cofactor.

It carries out the reaction 5-methylsulfanyl-2,3-dioxopentyl phosphate + H2O = 1,2-dihydroxy-5-(methylsulfanyl)pent-1-en-3-one + phosphate. It functions in the pathway amino-acid biosynthesis; L-methionine biosynthesis via salvage pathway; L-methionine from S-methyl-5-thio-alpha-D-ribose 1-phosphate: step 3/6. Its pathway is amino-acid biosynthesis; L-methionine biosynthesis via salvage pathway; L-methionine from S-methyl-5-thio-alpha-D-ribose 1-phosphate: step 4/6. Bifunctional enzyme that catalyzes the enolization of 2,3-diketo-5-methylthiopentyl-1-phosphate (DK-MTP-1-P) into the intermediate 2-hydroxy-3-keto-5-methylthiopentenyl-1-phosphate (HK-MTPenyl-1-P), which is then dephosphorylated to form the acireductone 1,2-dihydroxy-3-keto-5-methylthiopentene (DHK-MTPene). The polypeptide is Enolase-phosphatase E1 (Streptomyces avermitilis (strain ATCC 31267 / DSM 46492 / JCM 5070 / NBRC 14893 / NCIMB 12804 / NRRL 8165 / MA-4680)).